A 280-amino-acid polypeptide reads, in one-letter code: NAD(+) hydrolase TirS (280 aa).

The stretch at 22 to 94 forms a coiled coil; it reads MNKLPDEIDR…KINLQKEQSR (73 aa). Positions 141-275 constitute a TIR domain; sequence IEYDVFLSHS…EIVEKIYQVI (135 aa). NAD(+) contacts are provided by residues 150-151 and E180; that span reads SS. E216 is an active-site residue.

The protein resides in the secreted. The catalysed reaction is NAD(+) + H2O = ADP-D-ribose + nicotinamide + H(+). It carries out the reaction NADP(+) + H2O = ADP-D-ribose 2'-phosphate + nicotinamide + H(+). Its function is as follows. Virulence factor that suppresses host Toll-like receptor 2 (TLR2)-mediated NF-kappa-B signaling upon infection. NAD(+) hydrolase (NADase) that catalyzes cleavage of NAD(+) into ADP-D-ribose (ADPR) and nicotinamide. Also able to hydrolyze NADP(+), but not other NAD(+)-related molecules. Able to reduce NAD(+) levels in host cells. The polypeptide is NAD(+) hydrolase TirS (Staphylococcus aureus (strain MSSA476)).